The following is a 737-amino-acid chain: Procollagen-lysine,2-oxoglutarate 5-dioxygenase 2 (737 aa).

The signal sequence occupies residues 1–25; that stretch reads MGGCTVKPQLLLLALVLHPWNPCLG. Asparagine 63, asparagine 209, and asparagine 297 each carry an N-linked (GlcNAc...) asparagine glycan. A Phosphothreonine modification is found at threonine 320. Tyrosine 323 is subject to Phosphotyrosine. N-linked (GlcNAc...) asparagine glycans are attached at residues asparagine 365 and asparagine 522. Positions 644–737 constitute a Fe2OG dioxygenase domain; it reads KGFALLNFVV…RYIAVSFIDP (94 aa). Fe cation contacts are provided by histidine 666 and aspartate 668. Residue asparagine 696 is glycosylated (N-linked (GlcNAc...) asparagine). Lysine 704 bears the N6-succinyllysine mark. Position 718 (histidine 718) interacts with Fe cation. Residue asparagine 725 is glycosylated (N-linked (GlcNAc...) asparagine). Arginine 728 is an active-site residue.

In terms of assembly, homodimer. It depends on Fe(2+) as a cofactor. L-ascorbate serves as cofactor. As to expression, highly expressed in pancreas and muscle. Isoform 1 and isoform 2 are expressed in the majority of the examined cell types. Isoform 2 is specifically expressed in skin, lung, dura and aorta.

The protein resides in the rough endoplasmic reticulum membrane. The catalysed reaction is L-lysyl-[collagen] + 2-oxoglutarate + O2 = (5R)-5-hydroxy-L-lysyl-[collagen] + succinate + CO2. In terms of biological role, forms hydroxylysine residues in -Xaa-Lys-Gly- sequences in collagens. These hydroxylysines serve as sites of attachment for carbohydrate units and are essential for the stability of the intermolecular collagen cross-links. The sequence is that of Procollagen-lysine,2-oxoglutarate 5-dioxygenase 2 from Homo sapiens (Human).